Consider the following 498-residue polypeptide: MFFKPDFRPRCAKWLIATGLFLMLGACVEKPTTLERVKEDGVLRVITRNSPATYFQDRNGETGFEYELVKRFADDLGVELKIETADNLDDLFDQMNKPGGPVLGAAGLIETPLRKQQARFSHSYLEVTPQVVYRNGQSRPTDPGDLVGKRIVVLKGSAHAEQLAALKAQNPGIQYEESDAVEVVDLLRMVDEGQIDLTLVDSNELAMNQVYFPNVRVAFDLGEARAQRWAVAPGEDNSLLNEINAYLDKVEKNGTLQRLKDRYYGHVDVLGYVGAYTFAQHLQERLPKYEKHFQTSAKKEQVDWRLLAAIGYQESMWQPTVTSKTGVRGLMMLTQNTAQAMGVSNRLDARQSIQGGAKYFAYIKDQLDDSIKEPDRTWLALASYNIGSGHLEDARKLAQNEGLNPDKWLDVKKMLPRLAQKKWYSKTRYGYARGGEPVHFVANIRRYYDILTWVTQPQLEGSQVADGNLHVPGVDKTQPPVPPASPVPSSSSTDESPL.

A signal peptide spans 1 to 29; it reads MFFKPDFRPRCAKWLIATGLFLMLGACVE. The non-LT domain stretch occupies residues 30–267; the sequence is KPTTLERVKE…RLKDRYYGHV (238 aa). Residues 268–498 form an LT domain region; the sequence is DVLGYVGAYT…SSSSTDESPL (231 aa). Residue E314 is part of the active site. Residues 464–498 form a disordered region; that stretch reads VADGNLHVPGVDKTQPPVPPASPVPSSSSTDESPL.

The protein in the N-terminal section; belongs to the bacterial solute-binding protein 3 family. This sequence in the C-terminal section; belongs to the transglycosylase Slt family.

Its subcellular location is the cell outer membrane. It catalyses the reaction Exolytic cleavage of the (1-&gt;4)-beta-glycosidic linkage between N-acetylmuramic acid (MurNAc) and N-acetylglucosamine (GlcNAc) residues in peptidoglycan, from either the reducing or the non-reducing ends of the peptidoglycan chains, with concomitant formation of a 1,6-anhydrobond in the MurNAc residue.. Murein-degrading enzyme that degrades murein glycan strands and insoluble, high-molecular weight murein sacculi, with the concomitant formation of a 1,6-anhydromuramoyl product. Lytic transglycosylases (LTs) play an integral role in the metabolism of the peptidoglycan (PG) sacculus. Their lytic action creates space within the PG sacculus to allow for its expansion as well as for the insertion of various structures such as secretion systems and flagella. In Pseudomonas syringae pv. syringae (strain B728a), this protein is Membrane-bound lytic murein transglycosylase F.